The sequence spans 119 residues: Large ribosomal subunit protein uL18 (119 aa).

The disordered stretch occupies residues 1 to 20 (MISKPDKNKTRQKRHTRVRG). Residues 10-20 (TRQKRHTRVRG) show a composition bias toward basic residues.

This sequence belongs to the universal ribosomal protein uL18 family. In terms of assembly, part of the 50S ribosomal subunit; part of the 5S rRNA/L5/L18/L25 subcomplex. Contacts the 5S and 23S rRNAs.

Its function is as follows. This is one of the proteins that bind and probably mediate the attachment of the 5S RNA into the large ribosomal subunit, where it forms part of the central protuberance. This chain is Large ribosomal subunit protein uL18, found in Latilactobacillus sakei subsp. sakei (strain 23K) (Lactobacillus sakei subsp. sakei).